The sequence spans 440 residues: Amino acid transporter AVT6D (440 aa).

11 consecutive transmembrane segments (helical) span residues 26–46 (FAGA…MAIP), 47–67 (AAFK…IAWL), 102–122 (AVTV…SIII), 149–169 (WNTR…PLVL), 182–202 (ISFL…IIAL), 219–239 (GGLS…AFTF), 262–282 (ISVI…YLLF), 309–329 (IVRL…NFSL), 356–376 (FPLL…WYFF), 377–397 (QFLG…AIVL), and 410–430 (IVAS…ISTN).

This sequence belongs to the amino acid/polyamine transporter 2 family. Amino acid/auxin permease (AAAP) (TC 2.A.18.6) subfamily.

It is found in the membrane. The sequence is that of Amino acid transporter AVT6D from Arabidopsis thaliana (Mouse-ear cress).